A 205-amino-acid polypeptide reads, in one-letter code: Holliday junction branch migration complex subunit RuvA (205 aa).

The segment at M1–I64 is domain I. The segment at S65–E143 is domain II. The segment at R144–E156 is flexible linker. The tract at residues A157–L205 is domain III.

It belongs to the RuvA family. In terms of assembly, homotetramer. Forms an RuvA(8)-RuvB(12)-Holliday junction (HJ) complex. HJ DNA is sandwiched between 2 RuvA tetramers; dsDNA enters through RuvA and exits via RuvB. An RuvB hexamer assembles on each DNA strand where it exits the tetramer. Each RuvB hexamer is contacted by two RuvA subunits (via domain III) on 2 adjacent RuvB subunits; this complex drives branch migration. In the full resolvosome a probable DNA-RuvA(4)-RuvB(12)-RuvC(2) complex forms which resolves the HJ.

Its subcellular location is the cytoplasm. The RuvA-RuvB-RuvC complex processes Holliday junction (HJ) DNA during genetic recombination and DNA repair, while the RuvA-RuvB complex plays an important role in the rescue of blocked DNA replication forks via replication fork reversal (RFR). RuvA specifically binds to HJ cruciform DNA, conferring on it an open structure. The RuvB hexamer acts as an ATP-dependent pump, pulling dsDNA into and through the RuvAB complex. HJ branch migration allows RuvC to scan DNA until it finds its consensus sequence, where it cleaves and resolves the cruciform DNA. This Shewanella halifaxensis (strain HAW-EB4) protein is Holliday junction branch migration complex subunit RuvA.